A 236-amino-acid chain; its full sequence is Small ribosomal subunit protein uS5 (236 aa).

The region spanning 61–124 (ENQEILDIAL…NYAKLNIIEI (64 aa)) is the S5 DRBM domain.

Belongs to the universal ribosomal protein uS5 family. Part of the 30S ribosomal subunit. Contacts protein S4.

With S4 and S12 plays an important role in translational accuracy. The chain is Small ribosomal subunit protein uS5 from Pyrococcus abyssi (strain GE5 / Orsay).